The chain runs to 364 residues: Chorismate synthase (364 aa).

The NADP(+) site is built by R47 and R53. FMN is bound by residues 124–126 (RSS), G286, 301–305 (KPTAT), and R327.

It belongs to the chorismate synthase family. As to quaternary structure, homotetramer. Requires FMNH2 as cofactor.

It catalyses the reaction 5-O-(1-carboxyvinyl)-3-phosphoshikimate = chorismate + phosphate. It functions in the pathway metabolic intermediate biosynthesis; chorismate biosynthesis; chorismate from D-erythrose 4-phosphate and phosphoenolpyruvate: step 7/7. Functionally, catalyzes the anti-1,4-elimination of the C-3 phosphate and the C-6 proR hydrogen from 5-enolpyruvylshikimate-3-phosphate (EPSP) to yield chorismate, which is the branch point compound that serves as the starting substrate for the three terminal pathways of aromatic amino acid biosynthesis. This reaction introduces a second double bond into the aromatic ring system. The sequence is that of Chorismate synthase from Acaryochloris marina (strain MBIC 11017).